The following is a 753-amino-acid chain: 5-methyltetrahydropteroyltriglutamate--homocysteine methyltransferase (753 aa).

5-methyltetrahydropteroyltri-L-glutamate contacts are provided by residues arginine 17–lysine 20 and lysine 117. L-homocysteine contacts are provided by residues isoleucine 431 to serine 433 and glutamate 484. L-methionine is bound by residues isoleucine 431–serine 433 and glutamate 484. Residues arginine 515–cysteine 516 and tryptophan 561 each bind 5-methyltetrahydropteroyltri-L-glutamate. An L-homocysteine-binding site is contributed by aspartate 599. An L-methionine-binding site is contributed by aspartate 599. Glutamate 605 is a binding site for 5-methyltetrahydropteroyltri-L-glutamate. Histidine 641, cysteine 643, and glutamate 665 together coordinate Zn(2+). The active-site Proton donor is the histidine 694. Cysteine 726 is a Zn(2+) binding site.

It belongs to the vitamin-B12 independent methionine synthase family. The cofactor is Zn(2+).

It carries out the reaction 5-methyltetrahydropteroyltri-L-glutamate + L-homocysteine = tetrahydropteroyltri-L-glutamate + L-methionine. The protein operates within amino-acid biosynthesis; L-methionine biosynthesis via de novo pathway; L-methionine from L-homocysteine (MetE route): step 1/1. In terms of biological role, catalyzes the transfer of a methyl group from 5-methyltetrahydrofolate to homocysteine resulting in methionine formation. In Escherichia coli O6:H1 (strain CFT073 / ATCC 700928 / UPEC), this protein is 5-methyltetrahydropteroyltriglutamate--homocysteine methyltransferase.